Consider the following 669-residue polypeptide: MSQKETFYITTPIYYPSGKLHIGNSYTTIACDAMARYKRLMGFDVFYLTGVDEHGQKIEKKAAELNVTPKEYVDKMAADVQKLWKTLDISYDKFIRTTDDYHMAAVQQIFDRLVEQGDIYLGEYEGWYSVSDEEFFTETQLAEVYRDDEGNVIGGKAPSGHEVELVKEESYFFRMSKYADRLVQYYEEHPEFIQPESRKNEMLNNFIKPGLEDLAVSRTTFSWGIPLKNDPKHVVYVWIDALSNYITALGYGSEDDSLFQKYWPANVQMVGKEIVRFHTIYWPIMLMALDLPLPKKVFGHGWLLMKDGKMSKSKGNVVYPEMLVERYGLDALRYYLLRAIPFGSDGVFTPEDFVSRLNYDLANDLGNLLNRTIAMINKYCDGKVPAYASKVTPFDSELSTTAANVIGKYHEAMEKMEFNTAIAEIWTLVSRANKYIDETAPWVLAKEEEKRNELESVMIHLAESLRIVAILLQPVMTETPGKIFEQLGLDPETMNMENIHFGEFPTDVTVTSKGTPIFPRLEIETEVTYIQKKMSQSESATEEDIKWNPEETTLVSTKEKQIKYDDFDKVELKVAEVIDCKKVKGADKLLQFRLDAGDENHRQILSGIAEFYPDPAALIGKKVVIVANLKPRKMRGQISQGMILSAESPEGKLQIVEAPKEMPNGAGIA.

The 'HIGH' region motif lies at 14-24; the sequence is YYPSGKLHIGN. His161 is a Zn(2+) binding site. A 'KMSKS' region motif is present at residues 309–313; the sequence is KMSKS. An ATP-binding site is contributed by Lys312. Residues 566 to 669 form the tRNA-binding domain; that stretch reads DFDKVELKVA…KEMPNGAGIA (104 aa).

The protein belongs to the class-I aminoacyl-tRNA synthetase family. MetG type 2B subfamily. Homodimer.

Its subcellular location is the cytoplasm. It catalyses the reaction tRNA(Met) + L-methionine + ATP = L-methionyl-tRNA(Met) + AMP + diphosphate. Is required not only for elongation of protein synthesis but also for the initiation of all mRNA translation through initiator tRNA(fMet) aminoacylation. The sequence is that of Methionine--tRNA ligase from Enterococcus faecalis (strain ATCC 700802 / V583).